Here is an 814-residue protein sequence, read N- to C-terminus: Kexin (814 aa).

The signal sequence occupies residues 1 to 19 (MKVRKYITLCFWWAFSTSA). Residues 20–109 (LVSSQQIPLK…LFPRNDLFKR (90 aa)) constitute a propeptide that is removed on maturation. A glycan (N-linked (GlcNAc...) asparagine) is linked at N42. The propeptide at 110-113 (LPVP) is removed by dipeptidylpeptidase STE13. The Lumenal segment spans residues 114–678 (APPMDSSLLP…KLSSPRQAMH (565 aa)). D135 provides a ligand contact to Ca(2+). Residues 141-453 (QWHLVNPSFP…FGKIDAHKLI (313 aa)) form the Peptidase S8 domain. An N-linked (GlcNAc...) asparagine glycan is attached at N163. The Charge relay system role is filled by D175. Ca(2+) is bound at residue D184. H213 acts as the Charge relay system in catalysis. The Ca(2+) site is built by N227, D277, D320, and E350. Disulfide bonds link C230–C377 and C322–C352. The active-site Charge relay system is S385. N-linked (GlcNAc...) asparagine glycosylation is found at N404 and N480. Residues 462 to 596 (VNAQTWFYLP…RLKLFGESID (135 aa)) form the P/Homo B domain. The segment at 651–671 (PQTTTASTDPDSDPNTPKKLS) is disordered. Over residues 653–667 (TTTASTDPDSDPNTP) the composition is skewed to low complexity. A helical membrane pass occupies residues 679-699 (YFLTIFLIGATFLVLYFMFFM). Residues 700 to 814 (KSRRRIRRSR…PDVPPSSGRS (115 aa)) lie on the Cytoplasmic side of the membrane. The disordered stretch occupies residues 756–814 (SLSSSENGDAEHTIDSVLTNENPFSDPIKQKFPNDANAESASNKLQELQPDVPPSSGRS). Polar residues predominate over residues 792 to 801 (NAESASNKLQ).

Belongs to the peptidase S8 family. Furin subfamily. Ca(2+) is required as a cofactor. O-glycosylated.

The protein resides in the golgi apparatus. It localises to the trans-Golgi network membrane. The enzyme catalyses Cleavage of -Lys-Arg-|-Xaa- and -Arg-Arg-|-Xaa- bonds to process yeast alpha-factor pheromone and killer toxin precursors.. Processing of precursors of alpha-factors and killer toxin. In Saccharomyces cerevisiae (strain ATCC 204508 / S288c) (Baker's yeast), this protein is Kexin (KEX2).